Here is a 338-residue protein sequence, read N- to C-terminus: Lipoate-protein ligase A (338 aa).

A BPL/LPL catalytic domain is found at 29–216; sequence PATQRVLFLW…AFFAHYGERV (188 aa). Residues R71, 76 to 79, and K134 contribute to the ATP site; that span reads GAVF. K134 is a binding site for (R)-lipoate.

Belongs to the LplA family. Monomer.

It localises to the cytoplasm. The enzyme catalyses L-lysyl-[lipoyl-carrier protein] + (R)-lipoate + ATP = N(6)-[(R)-lipoyl]-L-lysyl-[lipoyl-carrier protein] + AMP + diphosphate + H(+). It functions in the pathway protein modification; protein lipoylation via exogenous pathway; protein N(6)-(lipoyl)lysine from lipoate: step 1/2. It participates in protein modification; protein lipoylation via exogenous pathway; protein N(6)-(lipoyl)lysine from lipoate: step 2/2. In terms of biological role, catalyzes both the ATP-dependent activation of exogenously supplied lipoate to lipoyl-AMP and the transfer of the activated lipoyl onto the lipoyl domains of lipoate-dependent enzymes. In Shigella boydii serotype 18 (strain CDC 3083-94 / BS512), this protein is Lipoate-protein ligase A.